A 1020-amino-acid polypeptide reads, in one-letter code: Mastermind-like protein 1 (1020 aa).

The required for interaction with NOTCH proteins stretch occupies residues methionine 1–alanine 97. Serine 45 is modified (phosphoserine). Residues lysine 67–glutamine 76 show a composition bias toward basic residues. Positions lysine 67 to aspartate 191 are disordered. The segment covering proline 77–leucine 99 has biased composition (low complexity). Residues aspartate 100 to leucine 122 are compositionally biased toward basic and acidic residues. Positions serine 124 to glutamine 133 are enriched in polar residues. 4 positions are modified to phosphoserine: serine 127, serine 310, serine 321, and serine 367. 6 disordered regions span residues glycine 335–threonine 522, proline 575–alanine 598, glutamate 663–phenylalanine 686, serine 725–alanine 748, glutamine 794–threonine 866, and alanine 888–leucine 959. Over residues aspartate 344–asparagine 369 the composition is skewed to polar residues. Residues alanine 373–alanine 383 show a composition bias toward low complexity. The span at glutamate 399–alanine 410 shows a compositional bias: polar residues. Over residues leucine 419 to alanine 435 the composition is skewed to low complexity. The segment covering proline 491–serine 515 has biased composition (polar residues). Residues proline 588–alanine 598 show a composition bias toward low complexity. A compositionally biased stretch (polar residues) spans glutamine 794–lysine 818. At lysine 827 the chain carries N6-acetyllysine. The segment covering methionine 837–proline 864 has biased composition (polar residues). A compositionally biased stretch (low complexity) spans serine 911 to alanine 920. Serine 1019 is modified (phosphoserine).

It belongs to the mastermind family. Interacts (via N-terminus) with NOTCH1, NOTCH2, NOTCH3 and NOTCH4 (via ankyrin repeat region). Interacts (via N-terminus) with p53 (via DNA-binding region). Forms a DNA-binding complex with Notch proteins and RBPSUH/RBP-J kappa/CBF1. Also binds CREBBP/CBP and CDK8. Forms a complex with PRAG1, NOTCH1 and MAML1, in a MAML1-dependent manner. As to expression, at E9.5, strongly expressed in the telencephalon, first branchial arch, forelimb buds and somites. By 10.5 dpc, continuously expressed in brain and spinal cord. Also expressed in first and second branchial arches and limb buds. By 11.5 dpc, expression in CNS is weak but increases in mesodermal tissues. At 14.5 dpc, detected in epithelial cells in trachea, esophagus and proximal and distal tubules of the developing lungs.

The protein localises to the nucleus speckle. Acts as a transcriptional coactivator for NOTCH proteins. Has been shown to amplify NOTCH-induced transcription of HES1. Enhances phosphorylation and proteolytic turnover of the NOTCH intracellular domain in the nucleus through interaction with CDK8. Binds to CREBBP/CBP which promotes nucleosome acetylation at NOTCH enhancers and activates transcription. Induces phosphorylation and localization of CREBBP to nuclear foci. Plays a role in hematopoietic development by regulating NOTCH-mediated lymphoid cell fate decisions. The chain is Mastermind-like protein 1 from Mus musculus (Mouse).